The following is an 89-amino-acid chain: Large ribosomal subunit protein bL27 (89 aa).

Positions 1–20 (MAHKKAGGSSRNGRDSAGKR) are disordered.

The protein belongs to the bacterial ribosomal protein bL27 family.

In Rhodopseudomonas palustris (strain HaA2), this protein is Large ribosomal subunit protein bL27.